The sequence spans 175 residues: MSKVKKNEEALSEVLVDVNRVTKVVKGGRRFAFSAYVVVGDKAGRVGAGHGKAKEVNEARGKAKQAAKKRMMKVPLYQNRTIHHDVVGKSGAAKVILRRAKAGTGVIAGGSMRAIFDSLGVHDIVAKSIGSTNVYAMISATFDALNKLASPKSIAIRRGKKVHEISVKSYIQVNK.

The S5 DRBM domain maps to 11-74 (LSEVLVDVNR…QAAKKRMMKV (64 aa)).

Belongs to the universal ribosomal protein uS5 family. As to quaternary structure, part of the 30S ribosomal subunit. Contacts proteins S4 and S8.

With S4 and S12 plays an important role in translational accuracy. Functionally, located at the back of the 30S subunit body where it stabilizes the conformation of the head with respect to the body. This is Small ribosomal subunit protein uS5 from Rickettsia typhi (strain ATCC VR-144 / Wilmington).